Consider the following 367-residue polypeptide: tRNA/tmRNA (uracil-C(5))-methyltransferase (367 aa).

Residues Gln190, Tyr218, Asn223, Glu239, and Asp299 each contribute to the S-adenosyl-L-methionine site. Cys324 (nucleophile) is an active-site residue. Glu358 functions as the Proton acceptor in the catalytic mechanism.

The protein belongs to the class I-like SAM-binding methyltransferase superfamily. RNA M5U methyltransferase family. TrmA subfamily.

The enzyme catalyses uridine(54) in tRNA + S-adenosyl-L-methionine = 5-methyluridine(54) in tRNA + S-adenosyl-L-homocysteine + H(+). It carries out the reaction uridine(341) in tmRNA + S-adenosyl-L-methionine = 5-methyluridine(341) in tmRNA + S-adenosyl-L-homocysteine + H(+). Its function is as follows. Dual-specificity methyltransferase that catalyzes the formation of 5-methyluridine at position 54 (m5U54) in all tRNAs, and that of position 341 (m5U341) in tmRNA (transfer-mRNA). This chain is tRNA/tmRNA (uracil-C(5))-methyltransferase, found in Yersinia pestis bv. Antiqua (strain Antiqua).